An 81-amino-acid chain; its full sequence is Putative membrane protein insertion efficiency factor (81 aa).

Residues Asn-61–Glu-81 form a disordered region.

This sequence belongs to the UPF0161 family.

It is found in the cell inner membrane. Functionally, could be involved in insertion of integral membrane proteins into the membrane. The chain is Putative membrane protein insertion efficiency factor from Pseudomonas fluorescens (strain Pf0-1).